Reading from the N-terminus, the 550-residue chain is Tyrosinase HcTyr2 (550 aa).

The Cu cation site is built by His-56, His-84, His-93, His-282, His-286, and His-326.

Belongs to the tyrosinase family. Cu(2+) is required as a cofactor.

It catalyses the reaction L-tyrosine + O2 = L-dopaquinone + H2O. The catalysed reaction is 2 L-tyrosine + O2 = 2 L-dopa. The enzyme catalyses 2 L-dopa + O2 = 2 L-dopaquinone + 2 H2O. Copper-containing oxidase that catalyzes the conversion of L-tyrosine to L-dopa and then to L-dopaquinone. Can use various phenols such as p-coumaric acid, phenol, pyrocatechol, syringol or pyrogallol. Accepts several of the constituents of lignin and potentially participates in lignin functionalization. The chain is Tyrosinase HcTyr2 from Hahella sp. (strain CCB-MM4).